The primary structure comprises 306 residues: MRVVFMGTPEFSVPILTAIIGHGYEVVAAYTQPPRPAGRRGLELTRSPVHEKAEQFGIPVFTPKSLKGAEEQDVFASLEADVAIVVAYGLLLPKAILDAPRLGCYNGHASLLPRWRGAAPIQRAIMAGDAETGMMIMKMDEGLDTGPVAMAEKVAITPDMTAGELHDRLSVIGADLMIRALGALERESLALQPQAEEGVTYAAKIDKAEARIDWSKPAKDVHNSIRGLSPFPGAWCEMEINGAVERVKLQRSTLGEGSGAPGTVLDDRLMIACGEGAVRLATLQRSGGKPLPAQEFLRGQRVTKVL.

110–113 (SLLP) lines the (6S)-5,6,7,8-tetrahydrofolate pocket.

Belongs to the Fmt family.

The enzyme catalyses L-methionyl-tRNA(fMet) + (6R)-10-formyltetrahydrofolate = N-formyl-L-methionyl-tRNA(fMet) + (6S)-5,6,7,8-tetrahydrofolate + H(+). Its function is as follows. Attaches a formyl group to the free amino group of methionyl-tRNA(fMet). The formyl group appears to play a dual role in the initiator identity of N-formylmethionyl-tRNA by promoting its recognition by IF2 and preventing the misappropriation of this tRNA by the elongation apparatus. The protein is Methionyl-tRNA formyltransferase of Brucella ovis (strain ATCC 25840 / 63/290 / NCTC 10512).